We begin with the raw amino-acid sequence, 621 residues long: MALLQISEPGKSLAPHQRRIAVGIDLGTTNSLVAIVQDALPKVLPDEQGRELLPSVVRYLPNGRTQAGFEALESVVIDPKNTILSVKRFMGRGISDVENIESAPYDFVDQPGMLKLRTVAGDKSPIEVSAEILARLRQLAEDSVNDDIVGAVITVPAYFDDAQRQATKDAAKLAGIEVLRLLNEPTAAAIAYGLDNATEGVYAVYDLGGGTFDISILRMSKGVFEVLSTGGDSALGGDDFDHRLYCWVIEQAKLPPLSIHDHRTLLQACKHAKELLSHNPLARVHETLADGTVVNVGISQAQLFEITQNLVSKTLVACKKALRDAGLKAEDIKGVVMVGGSTRMPNVQRAVGELFGTKPLNNLNPDQVVALGAAMQADLLAGNQSKDDEWLLLDVIPLSLGIETMGGLVEKIIPRNTPIPVARAQDFTTFKDGQTALAIQVVQGERELAQDCRSLGRFELRGIPPMAAGAARIRVTFQVDADGLLSVSATEIGSGVKASIDIKPSYGLTDGEITRMLQEGFSSAKEDLLARSLREEQVSAQRLLDAVQTALSTDRALLNEQEQAAIDQEMAQLQKILNEETDSSVVRKAVDHAAKATDEFAQKRMNASIQKALSGKNVAEI.

This sequence belongs to the heat shock protein 70 family.

Chaperone involved in the maturation of iron-sulfur cluster-containing proteins. Has a low intrinsic ATPase activity which is markedly stimulated by HscB. This is Chaperone protein HscA homolog from Polynucleobacter asymbioticus (strain DSM 18221 / CIP 109841 / QLW-P1DMWA-1) (Polynucleobacter necessarius subsp. asymbioticus).